The primary structure comprises 432 residues: EF-hand calcium-binding domain-containing protein 3 (432 aa).

EF-hand domains lie at 45 to 80 (AQLE…LGMN) and 81 to 116 (LNTY…KKLF). Residues aspartate 94, aspartate 96, aspartate 98, lysine 100, and aspartate 105 each contribute to the Ca(2+) site. Phosphotyrosine is present on tyrosine 273. The disordered stretch occupies residues 394–432 (SMNKSSPSNSGLSSPSDFSESDPETGRKRKRKSSRGFRQ). The span at 395–411 (MNKSSPSNSGLSSPSDF) shows a compositional bias: low complexity. Basic residues predominate over residues 420 to 432 (RKRKRKSSRGFRQ).

This is EF-hand calcium-binding domain-containing protein 3 (Efcab3) from Mus musculus (Mouse).